A 552-amino-acid polypeptide reads, in one-letter code: CTP synthase (552 aa).

An amidoligase domain region spans residues 1-273; it reads MSESKKNPET…LTPIARRFNM (273 aa). Ser-21 is a binding site for CTP. Ser-21 is a binding site for UTP. ATP-binding positions include 22 to 27 and Asp-79; that span reads SLGKGI. Asp-79 and Glu-147 together coordinate Mg(2+). Residues 154-156, 194-199, and Lys-230 each bind CTP; these read DIE and KTKPTQ. UTP contacts are provided by residues 194 to 199 and Lys-230; that span reads KTKPTQ. A Glutamine amidotransferase type-1 domain is found at 298–548; it reads TIAFVGKYLS…IQKSLELKKV (251 aa). Gly-359 serves as a coordination point for L-glutamine. Cys-386 acts as the Nucleophile; for glutamine hydrolysis in catalysis. Residues 387 to 390, Glu-410, and Arg-478 contribute to the L-glutamine site; that span reads LGMQ. Residues His-521 and Glu-523 contribute to the active site.

The protein belongs to the CTP synthase family. As to quaternary structure, homotetramer.

The catalysed reaction is UTP + L-glutamine + ATP + H2O = CTP + L-glutamate + ADP + phosphate + 2 H(+). It carries out the reaction L-glutamine + H2O = L-glutamate + NH4(+). It catalyses the reaction UTP + NH4(+) + ATP = CTP + ADP + phosphate + 2 H(+). Its pathway is pyrimidine metabolism; CTP biosynthesis via de novo pathway; CTP from UDP: step 2/2. With respect to regulation, allosterically activated by GTP, when glutamine is the substrate; GTP has no effect on the reaction when ammonia is the substrate. The allosteric effector GTP functions by stabilizing the protein conformation that binds the tetrahedral intermediate(s) formed during glutamine hydrolysis. Inhibited by the product CTP, via allosteric rather than competitive inhibition. Its function is as follows. Catalyzes the ATP-dependent amination of UTP to CTP with either L-glutamine or ammonia as the source of nitrogen. Regulates intracellular CTP levels through interactions with the four ribonucleotide triphosphates. The polypeptide is CTP synthase (Wolinella succinogenes (strain ATCC 29543 / DSM 1740 / CCUG 13145 / JCM 31913 / LMG 7466 / NCTC 11488 / FDC 602W) (Vibrio succinogenes)).